The chain runs to 78 residues: Small integral membrane protein 10-like protein 2A (78 aa).

In Homo sapiens (Human), this protein is Small integral membrane protein 10-like protein 2A.